Here is a 500-residue protein sequence, read N- to C-terminus: Centrosomal protein of 57 kDa (500 aa).

Residues 1–17 (MAAASVSAASGSHLSNS) show a composition bias toward low complexity. 2 disordered regions span residues 1 to 34 (MAAA…HSSS) and 43 to 62 (KPFL…LAYP). Positions 18-34 (FAEPSRSNGSMVRHSSS) are enriched in polar residues. Phosphoserine is present on residues S53 and S55. The interval 58–239 (TLAYPESNSR…KAAELQTGLE (182 aa)) is centrosome localization domain (CLD). Coiled coils occupy residues 63–242 (ESNS…ETNR) and 392–492 (ELKD…NSLQ). The segment at 277 to 491 (GAQPHYRLCL…KDMQSIQNSL (215 aa)) is mediates interaction with microtubules. Residues 434–450 (KKELKATKKTLDEERNS) show a composition bias toward basic and acidic residues. The interval 434–472 (KKELKATKKTLDEERNSSSRSGITGTTNKKDFMKLRPGE) is disordered. Residues 451–460 (SSRSGITGTT) show a composition bias toward polar residues. Residues 461–471 (NKKDFMKLRPG) are compositionally biased toward basic and acidic residues.

This sequence belongs to the translokin family. In terms of assembly, homodimer and homooligomer. Interacts with microtubules. Interacts with FGF2 and RAP80. Does not interact with FGF1 or FGF2 isoform 24 kDa. As to expression, ubiquitous.

Its subcellular location is the nucleus. The protein resides in the cytoplasm. The protein localises to the cytoskeleton. It is found in the microtubule organizing center. It localises to the centrosome. Its function is as follows. Centrosomal protein which may be required for microtubule attachment to centrosomes. May act by forming ring-like structures around microtubules. Mediates nuclear translocation and mitogenic activity of the internalized growth factor FGF2, but that of FGF1. The sequence is that of Centrosomal protein of 57 kDa (CEP57) from Homo sapiens (Human).